We begin with the raw amino-acid sequence, 640 residues long: MEGPAFSKPLKDKINPWGPLIILGILIRAGVSVQHDSPHQVFNVTWRVTNLMTGQTANATSLLGTMTDAFPKLYFDLCDLVGDDWDETGLGCRTPGGRKRARTFDFYVCPGHTVPTGCGGPREGYCGKWGCETTGQAYWKPSSSWDLISLKRGNTPRNQGPCYDSSAVSSDIKGATPGGRCNPLVLEFTDAGKKASWDGPKVWGLRLYRSTGTDPVTRFSLTRQVLNIGPRVPIGPNPVITDQLPPSRPVQIMLPRPPQPPPPGAASIVPETAPPSQQLGTGDRLLNLVNGAYQALNLTSPDKTQECWLCLVAGPPYYEGVAVLGTYSNHTSAPANCSVASQHKLTLSGVAGRGLCIAAFPKTHQALCNTTQKTSDGSYHLAAPAGTIWACNTGLTPCLSTTVLDLTTDYCVLVELWPKVTYHSPSYVYGQFEKKKTKYKREPVSLTLALLLGGLTMGGIAAGVGTGTTALVATQQFQQLQAAMHDDLKEVEKSITNLEKSLTSLSEVVLQNRRGLDLLFLKEGGLCAALKEECCFYADHTGLVRDSMAKLRERLSQRQKLFESQQGWFEGLFNKSPWFTTLISTIMGPLIILLLILLFGPWILNRLVQFIKDRISVVQALVLTQQYHQLKTIGDCKSRE.

The signal sequence occupies residues 1–32; the sequence is MEGPAFSKPLKDKINPWGPLIILGILIRAGVS. Residues 33 to 582 lie on the Extracellular side of the membrane; that stretch reads VQHDSPHQVF…FNKSPWFTTL (550 aa). N-linked (GlcNAc...) asparagine; by host glycans are attached at residues asparagine 43 and asparagine 58. Disulfide bonds link cysteine 109–cysteine 126 and cysteine 118–cysteine 131. The N-linked (GlcNAc...) asparagine; by host glycan is linked to asparagine 297. Disulfide bonds link cysteine 307-cysteine 310, cysteine 307-cysteine 535, cysteine 337-cysteine 391, cysteine 356-cysteine 368, cysteine 398-cysteine 411, and cysteine 527-cysteine 534. The short motif at 307–310 is the CXXC element; the sequence is CWLC. N-linked (GlcNAc...) asparagine; by host glycans are attached at residues asparagine 329 and asparagine 336. N-linked (GlcNAc...) asparagine; by host glycosylation is present at asparagine 369. Residues 444–464 are fusion peptide; it reads VSLTLALLLGGLTMGGIAAGV. Residues 473-509 adopt a coiled-coil conformation; that stretch reads ATQQFQQLQAAMHDDLKEVEKSITNLEKSLTSLSEVV. The segment at 510–526 is immunosuppression; that stretch reads LQNRRGLDLLFLKEGGL. Positions 527–535 match the CX6CC motif; the sequence is CAALKEECC. A helical membrane pass occupies residues 583–603; the sequence is ISTIMGPLIILLLILLFGPWI. The Cytoplasmic portion of the chain corresponds to 604 to 640; that stretch reads LNRLVQFIKDRISVVQALVLTQQYHQLKTIGDCKSRE. The YXXL motif; contains endocytosis signal signature appears at 627–630; the sequence is YHQL.

In terms of assembly, the mature envelope protein (Env) consists of a trimer of SU-TM heterodimers attached by a labile interchain disulfide bond. Post-translationally, specific enzymatic cleavages in vivo yield mature proteins. Envelope glycoproteins are synthesized as an inactive precursor that is N-glycosylated and processed likely by host cell furin or by a furin-like protease in the Golgi to yield the mature SU and TM proteins. The cleavage site between SU and TM requires the minimal sequence [KR]-X-[KR]-R. The R-peptide is released from the C-terminus of the cytoplasmic tail of the TM protein upon particle formation as a result of proteolytic cleavage by the viral protease. Cleavage of this peptide is required for TM to become fusogenic. In terms of processing, the CXXC motif is highly conserved across a broad range of retroviral envelope proteins. It is thought to participate in the formation of a labile disulfide bond possibly with the CX6CC motif present in the transmembrane protein. Isomerization of the intersubunit disulfide bond to an SU intrachain disulfide bond is thought to occur upon receptor recognition in order to allow membrane fusion. The R-peptide is palmitoylated.

Its subcellular location is the virion membrane. It is found in the host cell membrane. In terms of biological role, the surface protein (SU) attaches the virus to the host cell by binding to its receptor. This interaction triggers the refolding of the transmembrane protein (TM) and is thought to activate its fusogenic potential by unmasking its fusion peptide. Fusion occurs at the host cell plasma membrane. Functionally, the transmembrane protein (TM) acts as a class I viral fusion protein. Under the current model, the protein has at least 3 conformational states: pre-fusion native state, pre-hairpin intermediate state, and post-fusion hairpin state. During viral and target cell membrane fusion, the coiled coil regions (heptad repeats) assume a trimer-of-hairpins structure, positioning the fusion peptide in close proximity to the C-terminal region of the ectodomain. The formation of this structure appears to drive apposition and subsequent fusion of viral and target cell membranes. Membranes fusion leads to delivery of the nucleocapsid into the cytoplasm. This chain is Envelope glycoprotein (env), found in Mus musculus (Mouse).